A 447-amino-acid polypeptide reads, in one-letter code: Rab GDP dissociation inhibitor alpha (447 aa).

Belongs to the Rab GDI family. In terms of assembly, interacts with RHOH. Interacts with the non-phosphorylated forms of RAB1A, RAB3A, RAB5A, RAB5B, RAB5C, RAB8A, RAB8B, RAB10, RAB12, RAB35, and RAB43. In terms of tissue distribution, brain; predominant in neural and sensory tissues.

The protein resides in the cytoplasm. It localises to the golgi apparatus. It is found in the trans-Golgi network. Regulates the GDP/GTP exchange reaction of most Rab proteins by inhibiting the dissociation of GDP from them, and the subsequent binding of GTP to them. Promotes the dissociation of GDP-bound Rab proteins from the membrane and inhibits their activation. Promotes the dissociation of RAB1A, RAB3A, RAB5A and RAB10 from membranes. This Homo sapiens (Human) protein is Rab GDP dissociation inhibitor alpha (GDI1).